We begin with the raw amino-acid sequence, 230 residues long: Lipoprotein-releasing system ATP-binding protein LolD (230 aa).

In terms of domain architecture, ABC transporter spans 6–230 (LQASNLEKEY…GHFILPSETL (225 aa)). Position 42–49 (42–49 (GSSGSGKS)) interacts with ATP.

This sequence belongs to the ABC transporter superfamily. Lipoprotein translocase (TC 3.A.1.125) family. As to quaternary structure, the complex is composed of two ATP-binding proteins (LolD) and two transmembrane proteins (LolC and LolE).

It localises to the cell inner membrane. In terms of biological role, part of the ABC transporter complex LolCDE involved in the translocation of mature outer membrane-directed lipoproteins, from the inner membrane to the periplasmic chaperone, LolA. Responsible for the formation of the LolA-lipoprotein complex in an ATP-dependent manner. In Hydrogenovibrio crunogenus (strain DSM 25203 / XCL-2) (Thiomicrospira crunogena), this protein is Lipoprotein-releasing system ATP-binding protein LolD.